Reading from the N-terminus, the 231-residue chain is 2,3-bisphosphoglycerate-dependent phosphoglycerate mutase (231 aa).

Residues 10 to 17 (RHGQSEWN), 23 to 24 (TG), arginine 62, 89 to 92 (ERHY), lysine 100, 116 to 117 (RR), and 185 to 186 (GN) contribute to the substrate site. Histidine 11 acts as the Tele-phosphohistidine intermediate in catalysis. Catalysis depends on glutamate 89, which acts as the Proton donor/acceptor.

This sequence belongs to the phosphoglycerate mutase family. BPG-dependent PGAM subfamily. As to quaternary structure, homodimer.

The catalysed reaction is (2R)-2-phosphoglycerate = (2R)-3-phosphoglycerate. It functions in the pathway carbohydrate degradation; glycolysis; pyruvate from D-glyceraldehyde 3-phosphate: step 3/5. Functionally, catalyzes the interconversion of 2-phosphoglycerate and 3-phosphoglycerate. This chain is 2,3-bisphosphoglycerate-dependent phosphoglycerate mutase, found in Buchnera aphidicola subsp. Acyrthosiphon pisum (strain 5A).